The following is a 172-amino-acid chain: Protein PLASTID REDOX INSENSITIVE 2, chloroplastic (172 aa).

Residues 1-54 (MAARLWAAAVAPATLNPPLLTLSASSSPSSSRLRRSVLGRLRSRAPRPADFVCR) constitute a chloroplast transit peptide.

It localises to the plastid. The protein resides in the chloroplast stroma. The protein localises to the chloroplast nucleoid. Its function is as follows. Required for the activity of the plastid-encoded RNA polymerase (PEP) and full expression of genes transcribed by PEP. The sequence is that of Protein PLASTID REDOX INSENSITIVE 2, chloroplastic from Oryza sativa subsp. japonica (Rice).